We begin with the raw amino-acid sequence, 242 residues long: uncharacterized protein (242 aa).

It localises to the cytoplasm. The protein localises to the nucleus. This is an uncharacterized protein from Schizosaccharomyces pombe (strain 972 / ATCC 24843) (Fission yeast).